The primary structure comprises 219 residues: Protein DMP5 (219 aa).

The tract at residues M1 to P24 is disordered. Transmembrane regions (helical) follow at residues L51–T71, F82–D102, M142–L162, and V182–P202.

Belongs to the plant DMP1 protein family.

The protein resides in the endoplasmic reticulum membrane. In terms of biological role, involved in membrane remodeling. This is Protein DMP5 from Arabidopsis thaliana (Mouse-ear cress).